The sequence spans 223 residues: Small ribosomal subunit protein uS3 (223 aa).

Residues 39-108 (IRNFVKKNSY…NILINIVEVK (70 aa)) form the KH type-2 domain.

Belongs to the universal ribosomal protein uS3 family. In terms of assembly, part of the 30S ribosomal subunit. Forms a tight complex with proteins S10 and S14.

In terms of biological role, binds the lower part of the 30S subunit head. Binds mRNA in the 70S ribosome, positioning it for translation. The chain is Small ribosomal subunit protein uS3 from Clostridium botulinum (strain Okra / Type B1).